A 317-amino-acid chain; its full sequence is Lipoyl synthase (317 aa).

Residues 1 to 22 form a disordered region; that stretch reads MVTVVNTLNRPRHPEKQNRPET. The span at 12-22 shows a compositional bias: basic and acidic residues; the sequence is RHPEKQNRPET. Positions 57, 62, 68, 83, 87, 90, and 296 each coordinate [4Fe-4S] cluster. Residues 69–285 enclose the Radical SAM core domain; that stretch reads WEKKHATFMI…ETVAYAKGFL (217 aa).

The protein belongs to the radical SAM superfamily. Lipoyl synthase family. It depends on [4Fe-4S] cluster as a cofactor.

The protein resides in the cytoplasm. The enzyme catalyses [[Fe-S] cluster scaffold protein carrying a second [4Fe-4S](2+) cluster] + N(6)-octanoyl-L-lysyl-[protein] + 2 oxidized [2Fe-2S]-[ferredoxin] + 2 S-adenosyl-L-methionine + 4 H(+) = [[Fe-S] cluster scaffold protein] + N(6)-[(R)-dihydrolipoyl]-L-lysyl-[protein] + 4 Fe(3+) + 2 hydrogen sulfide + 2 5'-deoxyadenosine + 2 L-methionine + 2 reduced [2Fe-2S]-[ferredoxin]. Its pathway is protein modification; protein lipoylation via endogenous pathway; protein N(6)-(lipoyl)lysine from octanoyl-[acyl-carrier-protein]: step 2/2. Its function is as follows. Catalyzes the radical-mediated insertion of two sulfur atoms into the C-6 and C-8 positions of the octanoyl moiety bound to the lipoyl domains of lipoate-dependent enzymes, thereby converting the octanoylated domains into lipoylated derivatives. This is Lipoyl synthase from Azorhizobium caulinodans (strain ATCC 43989 / DSM 5975 / JCM 20966 / LMG 6465 / NBRC 14845 / NCIMB 13405 / ORS 571).